We begin with the raw amino-acid sequence, 104 residues long: L-rhamnose mutarotase (104 aa).

A substrate-binding site is contributed by Tyr18. The active-site Proton donor is His22. Residues Tyr41 and 76–77 contribute to the substrate site; that span reads WW.

Belongs to the rhamnose mutarotase family. As to quaternary structure, homodimer.

The protein resides in the cytoplasm. The enzyme catalyses alpha-L-rhamnose = beta-L-rhamnose. It functions in the pathway carbohydrate metabolism; L-rhamnose metabolism. Involved in the anomeric conversion of L-rhamnose. In Mannheimia succiniciproducens (strain KCTC 0769BP / MBEL55E), this protein is L-rhamnose mutarotase.